The chain runs to 297 residues: ClpXP adapter protein SpxH (297 aa).

Belongs to the SpxH family. In terms of assembly, interacts with Spx.

The protein resides in the cytoplasm. Functionally, adapter protein required for efficient degradation of Spx by ClpXP under non-stress conditions. Interaction with Spx stabilizes Spx and exposes the C-terminus of Spx for recognition and proteolysis by ClpXP. This chain is ClpXP adapter protein SpxH, found in Bacillus cereus (strain ATCC 14579 / DSM 31 / CCUG 7414 / JCM 2152 / NBRC 15305 / NCIMB 9373 / NCTC 2599 / NRRL B-3711).